A 558-amino-acid chain; its full sequence is Urocanate hydratase (558 aa).

NAD(+)-binding positions include 53–54 (GG), Q131, 177–179 (GMG), E197, R202, 243–244 (NA), 264–268 (QTSAH), 274–275 (YL), and Y323. The active site involves C411. NAD(+) is bound at residue G493.

The protein belongs to the urocanase family. NAD(+) serves as cofactor.

The protein localises to the cytoplasm. The enzyme catalyses 4-imidazolone-5-propanoate = trans-urocanate + H2O. It participates in amino-acid degradation; L-histidine degradation into L-glutamate; N-formimidoyl-L-glutamate from L-histidine: step 2/3. In terms of biological role, catalyzes the conversion of urocanate to 4-imidazolone-5-propionate. This is Urocanate hydratase from Idiomarina loihiensis (strain ATCC BAA-735 / DSM 15497 / L2-TR).